A 261-amino-acid polypeptide reads, in one-letter code: Sepiapterin reductase (261 aa).

NADP(+) is bound by residues 16-22, 44-45, and 71-72; these read GASRGFG, RT, and DL. Substrate contacts are provided by residues 158 to 159 and Tyr171; that span reads SL. Lys175 is an NADP(+) binding site. Gly200 is a binding site for substrate. 202 to 207 serves as a coordination point for NADP(+); the sequence is LDTDMH. Asp258 contacts substrate.

The protein belongs to the sepiapterin reductase family. Homodimer.

Its subcellular location is the cytoplasm. The catalysed reaction is L-erythro-7,8-dihydrobiopterin + NADP(+) = L-sepiapterin + NADPH + H(+). The enzyme catalyses (6R)-L-erythro-5,6,7,8-tetrahydrobiopterin + 2 NADP(+) = 6-pyruvoyl-5,6,7,8-tetrahydropterin + 2 NADPH + 2 H(+). Catalyzes the final one or two reductions in tetra-hydrobiopterin biosynthesis to form 5,6,7,8-tetrahydrobiopterin. This Xenopus tropicalis (Western clawed frog) protein is Sepiapterin reductase (spr).